A 352-amino-acid chain; its full sequence is Fc receptor-like A (352 aa).

Residues 1 to 30 (MKLSCTLTQWALYVCPAVLLATQMLLAASS) form the signal peptide. The interval 46-65 (CQAAAEEDEGDEDDGDMTQS) is disordered. Residues 50–61 (AEEDEGDEDDGD) are compositionally biased toward acidic residues. 2 consecutive Ig-like C2-type domains span residues 80–169 (PFHL…EAAS) and 182–260 (PVLK…RQIS). Disulfide bonds link Cys-109-Cys-153 and Cys-202-Cys-250. The disordered stretch occupies residues 275-310 (KPTASETPPTEALGPLPPPPASSAEQPRFSSPDPHL).

Monomer or homodimer; disulfide-linked. In terms of tissue distribution, highly expressed in spleen. Expressed in immature B-cell and B-cell lines.

Its subcellular location is the cytoplasm. In terms of biological role, may be implicated in B-cell differentiation and lymphomagenesis. The protein is Fc receptor-like A (Fcrla) of Mus musculus (Mouse).